The primary structure comprises 162 residues: NADH-quinone oxidoreductase subunit C (162 aa).

Belongs to the complex I 30 kDa subunit family. NDH-1 is composed of 14 different subunits. Subunits NuoB, C, D, E, F, and G constitute the peripheral sector of the complex.

It is found in the cell inner membrane. The enzyme catalyses a quinone + NADH + 5 H(+)(in) = a quinol + NAD(+) + 4 H(+)(out). NDH-1 shuttles electrons from NADH, via FMN and iron-sulfur (Fe-S) centers, to quinones in the respiratory chain. The immediate electron acceptor for the enzyme in this species is believed to be ubiquinone. Couples the redox reaction to proton translocation (for every two electrons transferred, four hydrogen ions are translocated across the cytoplasmic membrane), and thus conserves the redox energy in a proton gradient. This Geobacter sulfurreducens (strain ATCC 51573 / DSM 12127 / PCA) protein is NADH-quinone oxidoreductase subunit C.